Here is a 287-residue protein sequence, read N- to C-terminus: 4-hydroxybenzoate octaprenyltransferase (287 aa).

Helical transmembrane passes span 23–43, 46–66, 99–119, 141–161, 162–182, 213–233, 237–257, and 266–286; these read IGSL…GGTA, GKLL…GCVI, LFVL…AMTI, LPQV…YAAV, GESL…WTVA, LVIG…GDLN, GAYY…QQLI, and FRAF…ILLA.

Belongs to the UbiA prenyltransferase family. The cofactor is Mg(2+).

The protein localises to the cell inner membrane. It carries out the reaction all-trans-octaprenyl diphosphate + 4-hydroxybenzoate = 4-hydroxy-3-(all-trans-octaprenyl)benzoate + diphosphate. It functions in the pathway cofactor biosynthesis; ubiquinone biosynthesis. Its function is as follows. Catalyzes the prenylation of para-hydroxybenzoate (PHB) with an all-trans polyprenyl group. Mediates the second step in the final reaction sequence of ubiquinone-8 (UQ-8) biosynthesis, which is the condensation of the polyisoprenoid side chain with PHB, generating the first membrane-bound Q intermediate 3-octaprenyl-4-hydroxybenzoate. The polypeptide is 4-hydroxybenzoate octaprenyltransferase (Edwardsiella ictaluri (strain 93-146)).